We begin with the raw amino-acid sequence, 274 residues long: MNRTAFCCLSLTTALILTACSSGGGGVAADIGAGLADALTAPLDHKDKGLQSLTLDQSVRKNEKLKLAAQGAEKTYGNGDSLNTGKLKNDKVSRFDFIRQIEVDGQLITLESGEFQVYKQSHSALTAFQTEQIQDSEHSGKMVAKRQFRIGDIAGEHTSFDKLPEGGRATYRGTAFGSDDAGGKLTYTIDFAAKQGNGKIEHLKSPELNVDLAAADIKPDGKRHAVISGSVLYNQAEKGSYSLGIFGGKAQEVAGSAEVKTVNGIRHIGLAAKQ.

Residues 1-19 (MNRTAFCCLSLTTALILTA) form the signal peptide. Residue Cys-20 is the site of N-palmitoyl cysteine attachment. Residue Cys-20 is the site of S-diacylglycerol cysteine attachment. Residues 27 to 119 (VAADIGAGLA…LESGEFQVYK (93 aa)) form a domain A region. The domain B stretch occupies residues 120–183 (QSHSALTAFQ…TAFGSDDAGG (64 aa)). Residues 184 to 274 (KLTYTIDFAA…IRHIGLAAKQ (91 aa)) are domain C.

The protein belongs to the factor H binding-protein family. Binds to host factor H (fH from human). Both fHbp beta-barrels contact Sushi domains 6 and 7 in fH (also called complement control protein domains, CCP). This interaction probably mimics the normal (carbohydrate-dependent) mode of fH recruitement, regulating fH activity. Sucrose octasulphate inhibits the fHbp-fH interaction. Post-translationally, protein is lipidated in N.meningitidis upon growth in radioactive palmitic acid, probably on Cys-20.

Its subcellular location is the cell outer membrane. The protein resides in the secreted. It is found in the extracellular vesicle. The protein localises to the bacterial extracellular vesicle. Functionally, a bacterial surface lipoprotein that binds host (human) complement factor H (fH, gene CFH), binding contributes to the avoidance of complement-mediated lysis by N.meningitidis. Binding of fH to the bacteria surface is independent of bacterial sialic acid moieties. fH binding affinity is high enough that it may sequester plasma fH, depleting its circulating levels and de-regulating complement in the host. This protein induces high levels of bactericidal antibodies in mice. This chain is Factor H binding protein (fhbP), found in Neisseria meningitidis serogroup B (strain ATCC BAA-335 / MC58).